The primary structure comprises 104 residues: Type VII secretion system extracellular protein B (104 aa).

The protein belongs to the WXG100 family. In terms of assembly, homodimer. When mixed with EsxA does not form heterodimers.

Its subcellular location is the secreted. Virulence factor that is important for the establishment of infection in the host. EsxB is required for EsxA synthesis as well as secretion. Mediates together with EsxA the release of S.aureus from the host cell. Also inhibits host cytokine production and thus modulates dendritic cell-mediated immunity. In Staphylococcus aureus (strain Mu50 / ATCC 700699), this protein is Type VII secretion system extracellular protein B.